A 409-amino-acid chain; its full sequence is Argininosuccinate synthase (409 aa).

Residue 9–17 (AYSGGLDTS) coordinates ATP. An L-citrulline-binding site is contributed by tyrosine 86. Glycine 116 provides a ligand contact to ATP. L-aspartate is bound by residues threonine 118, asparagine 122, and aspartate 123. Asparagine 122 is an L-citrulline binding site. Residues arginine 126, serine 174, serine 183, glutamate 259, and tyrosine 271 each coordinate L-citrulline.

Belongs to the argininosuccinate synthase family. Type 1 subfamily. In terms of assembly, homotetramer.

Its subcellular location is the cytoplasm. The enzyme catalyses L-citrulline + L-aspartate + ATP = 2-(N(omega)-L-arginino)succinate + AMP + diphosphate + H(+). The protein operates within amino-acid biosynthesis; L-arginine biosynthesis; L-arginine from L-ornithine and carbamoyl phosphate: step 2/3. The polypeptide is Argininosuccinate synthase (Halalkalibacterium halodurans (strain ATCC BAA-125 / DSM 18197 / FERM 7344 / JCM 9153 / C-125) (Bacillus halodurans)).